The primary structure comprises 811 residues: Potassium transporter 7 (811 aa).

Residues 1–52 (MPSYQYLLSLLFYILDCTDRFSVIVTIHNHRVGVLMIVLLQDQWKSYCRTIS) lie on the Cytoplasmic side of the membrane. The helical transmembrane segment at 53 to 73 (LLAFQSFGVVYGDLSTSPLYV) threads the bilayer. Residues 74-93 (YKSAFSGRLNNYRDETTIFG) are Extracellular-facing. A helical transmembrane segment spans residues 94–114 (LFSLIFWTLTLLPLLKYVIIV). Over 115–181 (LNADDNGEGG…EKHRKLRTCL (67 aa)) the chain is Cytoplasmic. A helical transmembrane segment spans residues 182–202 (LLFVLFGACMVIGDGVFTPAI). Over 203–217 (SVLSAISGLKDPGPG) the chain is Extracellular. Residues 218 to 238 (GIPDGWVVFIACIVLVGLFAL) form a helical membrane-spanning segment. The Cytoplasmic segment spans residues 239 to 245 (QHRGTHR). The helical transmembrane segment at 246–266 (VAFMFAPIVVVWLLSIGVIGL) threads the bilayer. The Extracellular portion of the chain corresponds to 267–296 (YNIIHWNHRIFLALSPHYVIKFFKMTGKDG). The helical transmembrane segment at 297–317 (WLSLGGVLLAITGTEAMFADL) threads the bilayer. The Cytoplasmic segment spans residues 318–326 (GHFTAASIR). The helical transmembrane segment at 327-347 (LAFVGAIYPCLVLQYMGQAAF) threads the bilayer. Over 348–366 (LSRNMSAVEDSFYQSVPRS) the chain is Extracellular. N-linked (GlcNAc...) asparagine glycosylation is present at N351. The helical transmembrane segment at 367-387 (LFWPVFVIATLAAVVGSQSII) threads the bilayer. Residues 388 to 418 (SATFSIVKQCLSLGCFPRVKVVHTSRWIHGQ) lie on the Cytoplasmic side of the membrane. The helical transmembrane segment at 419–439 (IYIPEINWILMVLCLAVTLGF) threads the bilayer. At 440–450 (RDTTVIGNAYG) the chain is on the extracellular side. The helical transmembrane segment at 451 to 471 (LACIVVMFVTTWLMALVIIFV) threads the bilayer. Over 472 to 475 (WQKN) the chain is Cytoplasmic. The helical transmembrane segment at 476–496 (ILLALLFVVAFGSIEVVYLSA) threads the bilayer. Residues 497–503 (AVTKVPQ) lie on the Extracellular side of the membrane. The helical transmembrane segment at 504–524 (GGWAPIVFAFVFMLVMYVWHY) threads the bilayer. At 525–811 (GSRRKYLFDL…LVEVGMIYYV (287 aa)) the chain is on the cytoplasmic side. Positions 680–702 (TGLVMRDSNNEASGTSLTRSSRS) are disordered.

The protein belongs to the HAK/KUP transporter (TC 2.A.72.3) family. As to expression, expressed in roots and shoots.

The protein resides in the membrane. Its function is as follows. High-affinity potassium transporter. The chain is Potassium transporter 7 (HAK7) from Oryza sativa subsp. japonica (Rice).